A 77-amino-acid polypeptide reads, in one-letter code: U8-lycotoxin-Ls1m (77 aa).

An N-terminal signal peptide occupies residues 1 to 20 (MKLIIFTGLVLFSIVSLIEA). Positions 21-26 (QAENEK) are excised as a propeptide.

The protein belongs to the neurotoxin 19 (CSTX) family. 08 (U8-Lctx) subfamily. In terms of processing, contains 4 disulfide bonds. Expressed by the venom gland.

It is found in the secreted. This is U8-lycotoxin-Ls1m from Lycosa singoriensis (Wolf spider).